The primary structure comprises 146 residues: Ataxin-7-like protein 1 (146 aa).

Disordered regions lie at residues 1-27 (MTSE…QEGT) and 125-146 (KRNA…QRQV). Over residues 127-138 (NASISWSGAESR) the composition is skewed to polar residues.

The sequence is that of Ataxin-7-like protein 1 (Atxn7l1) from Mus musculus (Mouse).